Reading from the N-terminus, the 800-residue chain is Putative antiporter subunit mnhA2 (800 aa).

The next 20 membrane-spanning stretches (helical) occupy residues 1–21 (MSLVYLLIAILVIMAMILLMS), 33–53 (IALVAPVISSIYFLIQIPSVA), 78–98 (GLSLMFSLIISLIGIAVFFYA), 118–138 (LFMFSMIGIVLSDNTILMYIF), 167–187 (FMITVFGGLALLVGFIMLYIM), 207–227 (GLFIPMIFMFLLGAFTKSAQF), 241–261 (TPVSAYLHSATMVKAGIFLLL), 273–293 (YVYIVTFVGLITMLFGSITAL), 300–320 (GILAYSTISQLGMIMAMVGIG), 331–351 (IASIYVFVLFGALFHLMNHAI), 387–407 (LVMTIAALSMAGVPFLNGFLS), 424–444 (FSLISMIAIVFVGVIASVFTF), 472–492 (PWLFSLPSLILMVLVPVIFFV), 527–547 (GFNIPLLLTIIIILLGSVLAI), 595–615 (IIMTLGIFMIIIGYGYIRIGL), 627–647 (GALEIILAIVTVTIGISLIFI), 651–671 (LTMVILNGVIGFVVTLFFIAM), 676–696 (LALTQLVVETITTILFIVSFS), 712–732 (IIKISVSLLMALIVVSLIFIT), and 768–788 (LDTLFEGLVLIITGLGIYTLL).

It belongs to the CPA3 antiporters (TC 2.A.63) subunit A family. May form a heterooligomeric complex that consists of seven subunits: mnhA2, mnhB2, mnhC2, mnhD2, mnhE2, mnhF2 and mnhG2.

Its subcellular location is the cell membrane. The polypeptide is Putative antiporter subunit mnhA2 (mnhA2) (Staphylococcus aureus (strain USA300)).